The primary structure comprises 317 residues: L-lactate dehydrogenase (317 aa).

NAD(+)-binding positions include valine 17, aspartate 38, lysine 43, tyrosine 68, and 82–83 (GV). Arginine 91 is a binding site for substrate. NAD(+) contacts are provided by residues serine 104, 121–123 (VSN), and serine 146. 123–126 (NPVD) contacts substrate. 151 to 154 (DTSR) contributes to the substrate binding site. The beta-D-fructose 1,6-bisphosphate site is built by lysine 156 and histidine 171. The Proton acceptor role is filled by histidine 178. Tyrosine 224 is subject to Phosphotyrosine. Threonine 233 serves as a coordination point for substrate.

It belongs to the LDH/MDH superfamily. LDH family. As to quaternary structure, homotetramer.

It localises to the cytoplasm. The enzyme catalyses (S)-lactate + NAD(+) = pyruvate + NADH + H(+). Its pathway is fermentation; pyruvate fermentation to lactate; (S)-lactate from pyruvate: step 1/1. With respect to regulation, allosterically activated by fructose 1,6-bisphosphate (FBP). Its function is as follows. Catalyzes the conversion of lactate to pyruvate. This Clostridium perfringens (strain ATCC 13124 / DSM 756 / JCM 1290 / NCIMB 6125 / NCTC 8237 / Type A) protein is L-lactate dehydrogenase.